Consider the following 488-residue polypeptide: UDP-N-acetylmuramate--L-alanine ligase (488 aa).

ATP is bound at residue 126–132; the sequence is GTHGKTT.

This sequence belongs to the MurCDEF family.

The protein resides in the cytoplasm. It carries out the reaction UDP-N-acetyl-alpha-D-muramate + L-alanine + ATP = UDP-N-acetyl-alpha-D-muramoyl-L-alanine + ADP + phosphate + H(+). It functions in the pathway cell wall biogenesis; peptidoglycan biosynthesis. Cell wall formation. The sequence is that of UDP-N-acetylmuramate--L-alanine ligase from Cronobacter sakazakii (strain ATCC BAA-894) (Enterobacter sakazakii).